The chain runs to 248 residues: 3-deoxy-manno-octulosonate cytidylyltransferase (248 aa).

The protein belongs to the KdsB family.

The protein localises to the cytoplasm. The enzyme catalyses 3-deoxy-alpha-D-manno-oct-2-ulosonate + CTP = CMP-3-deoxy-beta-D-manno-octulosonate + diphosphate. It participates in nucleotide-sugar biosynthesis; CMP-3-deoxy-D-manno-octulosonate biosynthesis; CMP-3-deoxy-D-manno-octulosonate from 3-deoxy-D-manno-octulosonate and CTP: step 1/1. The protein operates within bacterial outer membrane biogenesis; lipopolysaccharide biosynthesis. Its function is as follows. Activates KDO (a required 8-carbon sugar) for incorporation into bacterial lipopolysaccharide in Gram-negative bacteria. The protein is 3-deoxy-manno-octulosonate cytidylyltransferase of Alteromonas mediterranea (strain DSM 17117 / CIP 110805 / LMG 28347 / Deep ecotype).